We begin with the raw amino-acid sequence, 207 residues long: Uracil phosphoribosyltransferase (207 aa).

Residues Arg-77, Arg-102, and 129 to 137 (DPMLATGGS) contribute to the 5-phospho-alpha-D-ribose 1-diphosphate site. Residues Ile-192 and 197 to 199 (GDA) each bind uracil. Residue Asp-198 coordinates 5-phospho-alpha-D-ribose 1-diphosphate.

This sequence belongs to the UPRTase family. The cofactor is Mg(2+).

It carries out the reaction UMP + diphosphate = 5-phospho-alpha-D-ribose 1-diphosphate + uracil. It functions in the pathway pyrimidine metabolism; UMP biosynthesis via salvage pathway; UMP from uracil: step 1/1. Allosterically activated by GTP. Its function is as follows. Catalyzes the conversion of uracil and 5-phospho-alpha-D-ribose 1-diphosphate (PRPP) to UMP and diphosphate. The polypeptide is Uracil phosphoribosyltransferase (Mycoplasma capricolum subsp. capricolum (strain California kid / ATCC 27343 / NCTC 10154)).